The primary structure comprises 205 residues: Large ribosomal subunit protein uL13 (205 aa).

This sequence belongs to the universal ribosomal protein uL13 family.

In Lupinus luteus (European yellow lupine), this protein is Large ribosomal subunit protein uL13 (RPL13A).